The primary structure comprises 132 residues: Agouti-signaling protein (132 aa).

The signal sequence occupies residues Met1–Ser22. Asn39 carries an N-linked (GlcNAc...) asparagine glycan. The disordered stretch occupies residues Ile62–Cys93. Residues Ser63–Met79 are compositionally biased toward basic and acidic residues. Disulfide bonds link Cys93/Cys108, Cys100/Cys114, Cys107/Cys125, Cys111/Cys132, and Cys116/Cys123. An Agouti domain is found at Cys93–Cys132.

Its subcellular location is the secreted. Functionally, involved in the regulation of melanogenesis. The binding of ASP to MC1R precludes alpha-MSH initiated signaling and thus blocks production of cAMP, leading to a down-regulation of eumelanogenesis (brown/black pigment) and thus increasing synthesis of pheomelanin (yellow/red pigment). In Trachypithecus auratus (Javan langur), this protein is Agouti-signaling protein (ASIP).